The primary structure comprises 2212 residues: Voltage-dependent P/Q-type calcium channel subunit alpha-1A (2212 aa).

At 1 to 100 (MARFGDEMPG…KYAKKITEWP (100 aa)) the chain is on the cytoplasmic side. One copy of the I repeat lies at 87-365 (NVVRKYAKKI…LVLGVLSGEF (279 aa)). A helical transmembrane segment spans residues 101–119 (PFEYMILATIIANCIVLAL). At 120–138 (EQHLPDDDKTPMSERLDDT) the chain is on the extracellular side. The chain crosses the membrane as a helical span at residues 139-156 (EPYFIGIFCFEAGIKIVA). At 157 to 168 (LGFAFHKGSYLR) the chain is on the cytoplasmic side. The chain crosses the membrane as a helical span at residues 169 to 184 (NGWNVMDFVVVLTGIL). Topologically, residues 185–192 (ATVGTEFD) are extracellular. The chain crosses the membrane as a helical span at residues 193-211 (LRTLRAVRVLRPLKLVSGI). At 212 to 230 (PSLQVVLKSIMKAMIPLLQ) the chain is on the cytoplasmic side. A helical transmembrane segment spans residues 231-250 (IGLLLFFAILIFAIIGLEFY). Topologically, residues 251 to 337 (MGKFHTTCFE…NSNDASGNTW (87 aa)) are extracellular. N-linked (GlcNAc...) asparagine glycosylation occurs at Asn-285. Glu-320 is a binding site for Ca(2+). A helical transmembrane segment spans residues 338–362 (NWLYFIPLIIIGSFFMLNLVLGVLS). Over 363–489 (GEFAKERERV…FYIRRMVKTQ (127 aa)) the chain is Cytoplasmic. Positions 385-402 (QQIERELNGYMEWISKAE) are binding to the beta subunit. Phosphothreonine is present on Thr-411. Phosphoserine is present on residues Ser-450 and Ser-453. The stretch at 475–719 (ERRMRFYIRR…VFLAIAVDNL (245 aa)) is one II repeat. The chain crosses the membrane as a helical span at residues 490–509 (AFYWTVLSLVALNTLWLAIV). At 510-523 (HYNQPEWLSDFLYY) the chain is on the extracellular side. Residues 524–543 (AEFIFLGLFMSEMFIKMYGL) traverse the membrane as a helical segment. Over 544-551 (GTRPYFHS) the chain is Cytoplasmic. Residues 552-570 (SFNCFDCGVIIGSIFEVIW) form a helical membrane-spanning segment. Residues 571–580 (AVIKPGTSFG) lie on the Extracellular side of the membrane. The helical transmembrane segment at 581–599 (ISVLRALRLLRIFKVTKYW) threads the bilayer. Residues 600–618 (ASLRNLVVSLLNSMKSIIS) are Cytoplasmic-facing. Residues 619 to 638 (LLFLLFLFIVVFALLGMQLF) form a helical membrane-spanning segment. At 639 to 691 (GGQFNFDEGTPPTNFDTFPAAIMTVFQILTGEDWNEVMYDEIKSQGGVQGGMV) the chain is on the extracellular side. Position 670 (Glu-670) interacts with Ca(2+). The chain crosses the membrane as a helical span at residues 692 to 716 (FSIYFIVLTLFGNYTLLNVFLAIAV). At 717 to 1190 (DNLANAQELT…TNPLRRLCHY (474 aa)) the chain is on the cytoplasmic side. Ser-752, Ser-755, and Ser-792 each carry phosphoserine. Composition is skewed to basic and acidic residues over residues 814–824 (PDVKTHLDRPL), 850–862 (RPRE…DARR), 871–924 (APGR…EGEP), and 932–958 (RPGD…RAAD). Disordered regions lie at residues 814-1117 (PDVK…RKPE) and 1137-1170 (VNKN…KPMP). Phosphoserine is present on residues Ser-1038, Ser-1042, and Ser-1051. Polar residues predominate over residues 1056–1073 (GNSTNPGPALATNPQNAA). Residues 1074 to 1083 (SRRTPNNPGN) show a composition bias toward low complexity. Residues 1094-1111 (ENSLIVTNPSSTQPNSAK) are compositionally biased toward polar residues. Positions 1153-1163 (KKEEEEADPGE) are enriched in acidic residues. Residues 1182–1465 (NPLRRLCHYI…IFVALIIITF (284 aa)) form an III repeat. A helical membrane pass occupies residues 1191–1214 (ILNLRYFEMCILMVIAMSSIALAA). Residues 1215 to 1231 (EDPVQPNAPRNNVLRYF) are Extracellular-facing. The chain crosses the membrane as a helical span at residues 1232-1251 (DYVFTGVFTFEMVIKMIDLG). At 1252–1258 (LVLHQGA) the chain is on the cytoplasmic side. The chain crosses the membrane as a helical span at residues 1259–1282 (YFRDLWNILDFIVVSGALVAFAFT). Topologically, residues 1283-1293 (GNSKGKDINTI) are extracellular. A helical transmembrane segment spans residues 1294 to 1311 (KSLRVLRVLRPLKTIKRL). Over 1312 to 1330 (PKLKAVFDCVVNSLKNVFN) the chain is Cytoplasmic. A helical membrane pass occupies residues 1331 to 1350 (ILIVYMLFMFIFAVVAVQLF). Residues 1351-1437 (KGKFFHCTDE…QGPSPGYRME (87 aa)) lie on the Extracellular side of the membrane. Glu-1411 provides a ligand contact to Ca(2+). Residues 1438–1462 (MSIFYVVYFVVFPFFFVNIFVALII) form a helical membrane-spanning segment. Residues 1463 to 1518 (ITFQEQGDKMMEEYSLEKNERACIDFAISAKPLTRHMPQNKQSFQYRMWQFVVSPP) lie on the Cytoplasmic side of the membrane. The stretch at 1502 to 1765 (NKQSFQYRMW…LFVAVIMDNF (264 aa)) is one IV repeat. Residues 1519 to 1537 (FEYTIMAMIALNTIVLMMK) traverse the membrane as a helical segment. Over 1538-1551 (FYGASVAYENALRV) the chain is Extracellular. The helical transmembrane segment at 1552-1573 (FNIVFTSLFSLECVLKVMAFGI) threads the bilayer. Topologically, residues 1574–1580 (LNYFRDA) are cytoplasmic. Residues 1581 to 1600 (WNIFDFVTVLGSITDILVTE) traverse the membrane as a helical segment. Over 1601-1607 (FGNNFIN) the chain is Extracellular. N-linked (GlcNAc...) asparagine glycosylation occurs at Asn-1607. A helical membrane pass occupies residues 1608–1626 (LSFLRLFRAARLIKLLRQG). Over 1627–1645 (YTIRILLWTFVQSFKALPY) the chain is Cytoplasmic. Residues 1646 to 1665 (VCLLIAMLFFIYAIIGMQVF) traverse the membrane as a helical segment. Over 1666-1737 (GNIGIDGEDE…IQKPECGNEF (72 aa)) the chain is Extracellular. The helical transmembrane segment at 1738-1763 (AYFYFVSFIFLCSFLMLNLFVAVIMD) threads the bilayer. Residues 1764-2212 (NFEYLTRDSS…EGREHATHRQ (449 aa)) are Cytoplasmic-facing. Position 1935 is a phosphothreonine (Thr-1935). The segment at 1940-2212 (QRMEPPSPTQ…EGREHATHRQ (273 aa)) is disordered. Composition is skewed to polar residues over residues 1948–1963 (TQEG…STQL) and 1972–1997 (QESS…TGTW). 6 positions are modified to phosphoserine: Ser-1998, Ser-2016, Ser-2028, Ser-2030, Ser-2071, and Ser-2091. Residues 2008–2017 (PNSQPNSQSV) are compositionally biased toward polar residues. Residues 2018–2034 (EMREMGTDGYSDSEHYL) are compositionally biased toward basic and acidic residues. A compositionally biased stretch (polar residues) spans 2064–2073 (LSTISDTSPM). Composition is skewed to basic and acidic residues over residues 2085 to 2102 (RRLD…ENQR) and 2143 to 2153 (PSKDRDQDRGR). Residues 2154–2172 (PKDRKHRPHHHHHHHHHHP) are compositionally biased toward basic residues. Residues 2173–2212 (PAPDRERYAQERPDTGRARAREQRWSRSPSEGREHATHRQ) show a composition bias toward basic and acidic residues.

Belongs to the calcium channel alpha-1 subunit (TC 1.A.1.11) family. CACNA1A subfamily. Voltage-dependent calcium channels are multisubunit complexes, consisting of alpha-1, alpha-2, beta and delta subunits in a 1:1:1:1 ratio. The channel activity is directed by the pore-forming and voltage-sensitive alpha-1 subunit. In many cases, this subunit is sufficient to generate voltage-sensitive calcium channel activity. The auxiliary subunits beta and alpha-2/delta linked by a disulfide bridge regulate the channel activity. Interacts (via C-terminal CDB motif) with CABP1 in the pre- and postsynaptic membranes. Interacts with the spider omega-agatoxin-IVA (AC P30288). Interacts with TSPOAP1. In terms of tissue distribution, brain specific. Purkinje cells contain predominantly P-type VSCC, the Q-type being a prominent calcium current in cerebellar granule cells. Also found in heart, in kidney distal convoluted tubule (DCT), and in pituitary.

It is found in the cell membrane. It carries out the reaction Ca(2+)(in) = Ca(2+)(out). Functionally, voltage-sensitive calcium channels (VSCC) mediate the entry of calcium ions into excitable cells and are also involved in a variety of calcium-dependent processes, including muscle contraction, hormone or neurotransmitter release, gene expression, cell motility, cell division and cell death. The isoform alpha-1A gives rise to P and/or Q-type calcium currents. P/Q-type calcium channels belong to the 'high-voltage activated' (HVA) group and are specifically blocked by the spider omega-agatoxin-IVA (AC P30288). They are however insensitive to dihydropyridines (DHP). In Rattus norvegicus (Rat), this protein is Voltage-dependent P/Q-type calcium channel subunit alpha-1A.